A 249-amino-acid chain; its full sequence is NAD kinase (249 aa).

Residue aspartate 49 is the Proton acceptor of the active site. NAD(+)-binding positions include 49 to 50 (DG), arginine 54, 115 to 116 (NE), lysine 126, arginine 143, aspartate 145, isoleucine 153, 156 to 161 (TGYAFS), alanine 180, and glutamine 211.

This sequence belongs to the NAD kinase family. As to quaternary structure, homotetramer. Requires a divalent metal cation as cofactor.

Its subcellular location is the cytoplasm. It carries out the reaction NAD(+) + ATP = ADP + NADP(+) + H(+). Functionally, involved in the regulation of the intracellular balance between NAD(H) and NADP(H), and is a key enzyme in the biosynthesis of NADP. Catalyzes specifically the phosphorylation on 2'-hydroxyl of the adenosine moiety of NAD to yield NADP. The protein is NAD kinase of Archaeoglobus fulgidus (strain ATCC 49558 / DSM 4304 / JCM 9628 / NBRC 100126 / VC-16).